A 60-amino-acid chain; its full sequence is Large ribosomal subunit protein uL30 (60 aa).

The protein belongs to the universal ribosomal protein uL30 family. Part of the 50S ribosomal subunit.

The chain is Large ribosomal subunit protein uL30 from Burkholderia ambifaria (strain MC40-6).